The sequence spans 162 residues: Probable chemoreceptor glutamine deamidase CheD 3 (162 aa).

The protein belongs to the CheD family.

It carries out the reaction L-glutaminyl-[protein] + H2O = L-glutamyl-[protein] + NH4(+). Functionally, probably deamidates glutamine residues to glutamate on methyl-accepting chemotaxis receptors (MCPs), playing an important role in chemotaxis. The polypeptide is Probable chemoreceptor glutamine deamidase CheD 3 (Geobacter sulfurreducens (strain ATCC 51573 / DSM 12127 / PCA)).